The sequence spans 230 residues: Ropporin-1-like protein (230 aa).

The RIIa domain maps to 17-46 (PELPDILKQFTKAAIRTQPADVLRWSAGYF).

The protein belongs to the ropporin family. Component of the axonemal radial spoke complex 1 (RS1), at least composed of spoke head proteins RSPH1, RSPH3, RSPH9 and the cilia-specific component RSPH4A or sperm-specific component RSPH6A, spoke stalk proteins RSPH14, DNAJB13, DYDC1, ROPN1L and NME5, and the anchor protein IQUB. Interacts with FSCB; the interaction increases upon spermatozoa capacitation conditions. May interact with AKAP3. Interacts with CFAP61. In terms of processing, sumoylated, sumoylation decreases upon spermatozoa capacitation conditions.

The protein resides in the cell projection. The protein localises to the cilium. It is found in the flagellum. Its function is as follows. Functions as part of axonemal radial spoke complexes that play an important part in the motility of sperm and cilia. Important for male fertility. With ROPN1, involved in fibrous sheath integrity and sperm motility, plays a role in PKA-dependent signaling processes required for spermatozoa capacitation. In Homo sapiens (Human), this protein is Ropporin-1-like protein (ROPN1L).